Reading from the N-terminus, the 306-residue chain is Glutamyl-Q tRNA(Asp) synthetase (306 aa).

Residues 4-8 (RYAPS) and Glu-40 each bind L-glutamate. Positions 7–17 (PSPSGDLHFGN) match the 'HIGH' region motif. Zn(2+)-binding residues include Cys-92, Cys-94, Tyr-113, and Cys-117. The L-glutamate site is built by Tyr-180 and Arg-198. The 'KMSKS' region motif lies at 236–240 (RLAKR). Residue Lys-239 participates in ATP binding.

This sequence belongs to the class-I aminoacyl-tRNA synthetase family. GluQ subfamily. Zn(2+) is required as a cofactor.

Functionally, catalyzes the tRNA-independent activation of glutamate in presence of ATP and the subsequent transfer of glutamate onto a tRNA(Asp). Glutamate is transferred on the 2-amino-5-(4,5-dihydroxy-2-cyclopenten-1-yl) moiety of the queuosine in the wobble position of the QUC anticodon. In Corynebacterium efficiens (strain DSM 44549 / YS-314 / AJ 12310 / JCM 11189 / NBRC 100395), this protein is Glutamyl-Q tRNA(Asp) synthetase.